Reading from the N-terminus, the 255-residue chain is Triosephosphate isomerase (255 aa).

9–11 (NWK) provides a ligand contact to substrate. His95 functions as the Electrophile in the catalytic mechanism. Catalysis depends on Glu167, which acts as the Proton acceptor. Residues Gly173, Ser212, and 233–234 (GG) contribute to the substrate site.

This sequence belongs to the triosephosphate isomerase family. In terms of assembly, homodimer.

Its subcellular location is the cytoplasm. It catalyses the reaction D-glyceraldehyde 3-phosphate = dihydroxyacetone phosphate. It functions in the pathway carbohydrate biosynthesis; gluconeogenesis. Its pathway is carbohydrate degradation; glycolysis; D-glyceraldehyde 3-phosphate from glycerone phosphate: step 1/1. Involved in the gluconeogenesis. Catalyzes stereospecifically the conversion of dihydroxyacetone phosphate (DHAP) to D-glyceraldehyde-3-phosphate (G3P). In Yersinia pseudotuberculosis serotype O:1b (strain IP 31758), this protein is Triosephosphate isomerase.